Reading from the N-terminus, the 316-residue chain is Acetyl-coenzyme A carboxylase carboxyl transferase subunit alpha (316 aa).

The 254-residue stretch at 40–293 (LERRSKDALR…GETIENGFRE (254 aa)) folds into the CoA carboxyltransferase C-terminal domain.

It belongs to the AccA family. As to quaternary structure, acetyl-CoA carboxylase is a heterohexamer composed of biotin carboxyl carrier protein (AccB), biotin carboxylase (AccC) and two subunits each of ACCase subunit alpha (AccA) and ACCase subunit beta (AccD).

The protein resides in the cytoplasm. The enzyme catalyses N(6)-carboxybiotinyl-L-lysyl-[protein] + acetyl-CoA = N(6)-biotinyl-L-lysyl-[protein] + malonyl-CoA. The protein operates within lipid metabolism; malonyl-CoA biosynthesis; malonyl-CoA from acetyl-CoA: step 1/1. Functionally, component of the acetyl coenzyme A carboxylase (ACC) complex. First, biotin carboxylase catalyzes the carboxylation of biotin on its carrier protein (BCCP) and then the CO(2) group is transferred by the carboxyltransferase to acetyl-CoA to form malonyl-CoA. The protein is Acetyl-coenzyme A carboxylase carboxyl transferase subunit alpha of Chelativorans sp. (strain BNC1).